The following is a 457-amino-acid chain: Siroheme synthase (457 aa).

The precorrin-2 dehydrogenase /sirohydrochlorin ferrochelatase stretch occupies residues 1–204; the sequence is MDHLPIFCQL…ADEKAVNATT (204 aa). NAD(+) contacts are provided by residues 22 to 23 and 43 to 44; these read DV and LT. Ser128 is subject to Phosphoserine. The segment at 216–457 is uroporphyrinogen-III C-methyltransferase; that stretch reads GEVVLVGAGP…RDKLNWFSNY (242 aa). Pro225 contacts S-adenosyl-L-methionine. Asp248 serves as the catalytic Proton acceptor. The Proton donor role is filled by Lys270. S-adenosyl-L-methionine is bound by residues 301–303, Ile306, 331–332, Met382, and Gly411; these read GGD and TA.

This sequence in the N-terminal section; belongs to the precorrin-2 dehydrogenase / sirohydrochlorin ferrochelatase family. It in the C-terminal section; belongs to the precorrin methyltransferase family.

It catalyses the reaction uroporphyrinogen III + 2 S-adenosyl-L-methionine = precorrin-2 + 2 S-adenosyl-L-homocysteine + H(+). It carries out the reaction precorrin-2 + NAD(+) = sirohydrochlorin + NADH + 2 H(+). The enzyme catalyses siroheme + 2 H(+) = sirohydrochlorin + Fe(2+). It functions in the pathway cofactor biosynthesis; adenosylcobalamin biosynthesis; precorrin-2 from uroporphyrinogen III: step 1/1. Its pathway is cofactor biosynthesis; adenosylcobalamin biosynthesis; sirohydrochlorin from precorrin-2: step 1/1. It participates in porphyrin-containing compound metabolism; siroheme biosynthesis; precorrin-2 from uroporphyrinogen III: step 1/1. The protein operates within porphyrin-containing compound metabolism; siroheme biosynthesis; siroheme from sirohydrochlorin: step 1/1. It functions in the pathway porphyrin-containing compound metabolism; siroheme biosynthesis; sirohydrochlorin from precorrin-2: step 1/1. In terms of biological role, multifunctional enzyme that catalyzes the SAM-dependent methylations of uroporphyrinogen III at position C-2 and C-7 to form precorrin-2 via precorrin-1. Then it catalyzes the NAD-dependent ring dehydrogenation of precorrin-2 to yield sirohydrochlorin. Finally, it catalyzes the ferrochelation of sirohydrochlorin to yield siroheme. The sequence is that of Siroheme synthase from Salmonella heidelberg (strain SL476).